The sequence spans 255 residues: Pyrroloquinoline-quinone synthase (255 aa).

This sequence belongs to the PqqC family.

It catalyses the reaction 6-(2-amino-2-carboxyethyl)-7,8-dioxo-1,2,3,4,7,8-hexahydroquinoline-2,4-dicarboxylate + 3 O2 = pyrroloquinoline quinone + 2 H2O2 + 2 H2O + H(+). It functions in the pathway cofactor biosynthesis; pyrroloquinoline quinone biosynthesis. Its function is as follows. Ring cyclization and eight-electron oxidation of 3a-(2-amino-2-carboxyethyl)-4,5-dioxo-4,5,6,7,8,9-hexahydroquinoline-7,9-dicarboxylic-acid to PQQ. This Cereibacter sphaeroides (strain ATCC 17025 / ATH 2.4.3) (Rhodobacter sphaeroides) protein is Pyrroloquinoline-quinone synthase.